We begin with the raw amino-acid sequence, 264 residues long: Acyl-[acyl-carrier-protein]--UDP-N-acetylglucosamine O-acyltransferase (264 aa).

Belongs to the transferase hexapeptide repeat family. LpxA subfamily. As to quaternary structure, homotrimer.

It is found in the cytoplasm. It carries out the reaction a (3R)-hydroxyacyl-[ACP] + UDP-N-acetyl-alpha-D-glucosamine = a UDP-3-O-[(3R)-3-hydroxyacyl]-N-acetyl-alpha-D-glucosamine + holo-[ACP]. Its pathway is glycolipid biosynthesis; lipid IV(A) biosynthesis; lipid IV(A) from (3R)-3-hydroxytetradecanoyl-[acyl-carrier-protein] and UDP-N-acetyl-alpha-D-glucosamine: step 1/6. Functionally, involved in the biosynthesis of lipid A, a phosphorylated glycolipid that anchors the lipopolysaccharide to the outer membrane of the cell. This is Acyl-[acyl-carrier-protein]--UDP-N-acetylglucosamine O-acyltransferase from Chlorobaculum parvum (strain DSM 263 / NCIMB 8327) (Chlorobium vibrioforme subsp. thiosulfatophilum).